A 955-amino-acid polypeptide reads, in one-letter code: Mediator of RNA polymerase II transcription subunit 16 (955 aa).

Belongs to the Mediator complex subunit 16 family. Component of the Mediator complex.

It localises to the nucleus. In terms of biological role, component of the Mediator complex, a coactivator involved in the regulated transcription of nearly all RNA polymerase II-dependent genes. Mediator functions as a bridge to convey information from gene-specific regulatory proteins to the basal RNA polymerase II transcription machinery. Mediator is recruited to promoters by direct interactions with regulatory proteins and serves as a scaffold for the assembly of a functional preinitiation complex with RNA polymerase II and the general transcription factors. The sequence is that of Mediator of RNA polymerase II transcription subunit 16 (sin4) from Neosartorya fischeri (strain ATCC 1020 / DSM 3700 / CBS 544.65 / FGSC A1164 / JCM 1740 / NRRL 181 / WB 181) (Aspergillus fischerianus).